Reading from the N-terminus, the 2559-residue chain is Stabilin-2 (2559 aa).

An N-terminal signal peptide occupies residues 1-28; the sequence is MARSKLLLGKLLPLILIFLGLLVQNACS. The Extracellular portion of the chain corresponds to 29–2464; that stretch reads PTEAPELTKR…PPTAATAAHS (2436 aa). An N-linked (GlcNAc...) asparagine glycan is attached at Asn71. EGF-like domains follow at residues 116–156, 164–201, 203–244, 245–284, and 330–370; these read DCME…TACE, FGPNCSAVCSCVHGVCNSGISGDGTCECLSAYRGPRCD, PIPE…QTCK, PINPCLKNVCHPHASCSYLGPNRHSCVCQKGYQGDGQVCL, and MTDI…LNCY. 3 cysteine pairs are disulfide-bonded: Cys120-Cys134, Cys128-Cys144, and Cys146-Cys155. An N-linked (GlcNAc...) asparagine glycan is attached at Asn167. 12 cysteine pairs are disulfide-bonded: Cys168-Cys179, Cys172-Cys189, Cys191-Cys200, Cys207-Cys218, Cys212-Cys230, Cys232-Cys243, Cys249-Cys260, Cys254-Cys270, Cys272-Cys283, Cys334-Cys346, Cys340-Cys356, and Cys358-Cys369. Asn345 carries N-linked (GlcNAc...) asparagine glycosylation. 2 consecutive FAS1 domains span residues 379–512 and 522–659; these read ELNT…DRAM and NPQQ…TGVL. N-linked (GlcNAc...) asparagine glycosylation is found at Asn572, Asn626, Asn673, and Asn691. The EGF-like 6 domain occupies 743 to 783; that stretch reads DCNPCPGGFMNPCSGNGQCIDGLGGNGTCICEDGFQGSRCQ. Intrachain disulfides connect Cys747-Cys761, Cys755-Cys771, and Cys773-Cys782. The N-linked (GlcNAc...) asparagine glycan is linked to Asn768. A glycan (N-linked (GlcNAc...) asparagine) is linked at Asn796. EGF-like domains are found at residues 833-873, 874-917, 918-960, and 961-1002; these read QTSA…TLCS, KKDP…RDCV, EINS…IDCE, and PIIS…VLCY. 12 disulfides stabilise this stretch: Cys837–Cys850, Cys844–Cys859, Cys861–Cys872, Cys878–Cys893, Cys887–Cys903, Cys905–Cys916, Cys922–Cys936, Cys930–Cys946, Cys948–Cys959, Cys965–Cys978, Cys972–Cys988, and Cys990–Cys1001. An N-linked (GlcNAc...) asparagine glycan is attached at Asn854. N-linked (GlcNAc...) asparagine glycosylation occurs at Asn933. 2 FAS1 domains span residues 1002-1135 and 1145-1273; these read YGNV…NKVL and LPSL…EKVL. 5 N-linked (GlcNAc...) asparagine glycosylation sites follow: Asn1024, Asn1036, Asn1108, Asn1255, and Asn1283. The region spanning 1350-1415 is the Laminin EGF-like 1 domain; that stretch reads PQCQACPGKG…CSCVHGRCNQ (66 aa). Disulfide bonds link Cys1355–Cys1369, Cys1363–Cys1379, Cys1381–Cys1390, Cys1402–Cys1413, Cys1406–Cys1423, Cys1425–Cys1434, Cys1443–Cys1453, Cys1447–Cys1463, Cys1465–Cys1476, Cys1482–Cys1495, Cys1489–Cys1505, Cys1507–Cys1518, Cys1524–Cys1537, Cys1531–Cys1547, Cys1549–Cys1560, Cys1566–Cys1579, Cys1573–Cys1589, and Cys1591–Cys1602. N-linked (GlcNAc...) asparagine glycosylation is found at Asn1374 and Asn1386. 4 consecutive EGF-like domains span residues 1439 to 1477, 1478 to 1519, 1520 to 1561, and 1562 to 1603; these read TTDNCNGTCHTSANCLLDPDGKASCKCAAGFQGNGTVCT, AINA…IVCL, EINP…KVCT, and LINV…IVCR. Asn1444 carries an N-linked (GlcNAc...) asparagine glycan. An N-linked (GlcNAc...) asparagine glycan is attached at Asn1472. Asn1580 carries an N-linked (GlcNAc...) asparagine glycan. FAS1 domains are found at residues 1603 to 1731 and 1747 to 1888; these read RGSI…DTLL and VLLN…DCLL. N-linked (GlcNAc...) asparagine glycosylation occurs at Asn1750. The region spanning 1965–2030 is the Laminin EGF-like 2 domain; the sequence is PDCQACPGGP…GCSEHGQCDE (66 aa). 17 cysteine pairs are disulfide-bonded: Cys1970–Cys1984, Cys1978–Cys1994, Cys1996–Cys2005, Cys2017–Cys2028, Cys2022–Cys2038, Cys2040–Cys2049, Cys2059–Cys2069, Cys2063–Cys2075, Cys2077–Cys2088, Cys2094–Cys2107, Cys2101–Cys2116, Cys2118–Cys2129, Cys2135–Cys2149, Cys2143–Cys2159, Cys2161–Cys2172, Cys2228–Cys2296, and Cys2252–Cys2273. An N-linked (GlcNAc...) asparagine glycan is attached at Asn2001. 3 consecutive EGF-like domains span residues 2055 to 2089, 2090 to 2130, and 2131 to 2173; these read VIPVCIPACSMHATCMENNTCVCNLNYEGDGITCT, VVDF…HSCT, and EIDP…RDCE. Residue Asn2072 is glycosylated (N-linked (GlcNAc...) asparagine). One can recognise a Link domain in the interval 2206–2298; sequence GVFHLRSPLG…SEMWDVFCYR (93 aa). Asn2287, Asn2303, Asn2375, Asn2391, and Asn2400 each carry an N-linked (GlcNAc...) asparagine glycan. Residues 2318-2452 form the FAS1 7 domain; that stretch reads NGNLLQVLMS…GVLHIISEPL (135 aa). A helical membrane pass occupies residues 2465–2485; it reads GLGTGIFCAVVLVTGAIALAA. Over 2486 to 2559 the chain is Cytoplasmic; the sequence is YSYFRLNQRT…NSDPLGALRS (74 aa). Ser2503 carries the phosphoserine modification. Residues 2510 to 2520 are interaction with TMSB4X; the sequence is LAFGKQQPESI. The tract at residues 2514–2559 is disordered; sequence KQQPESITNPLYETSTPAAPEPSCDPFTDSGERELENSDPLGALRS. The span at 2516–2530 shows a compositional bias: polar residues; that stretch reads QPESITNPLYETSTP.

In terms of assembly, interacts with heparin, alpha-M/beta-2 integrin (ITGAM and ITGB2), and thymosin beta 4 (TMSB4X). Interacts with GULP1. Associates with clathrin and adapter protein AP-2; in liver sinusoidal endothelial cells (LSECs). In terms of processing, glycosylated. Post-translationally, proteolytically processed to yield a smaller protein. Expressed in endothelial sinuses of liver, lymph nodes, bone marrow, spleen and in specialised structures of eye, heart, brain and kidney. Expression is detected in corneal and lens epithelium, in mesenchymal cells of the heart valves, in the ependymal cells lining the ventricles in the brain, and in the prismatic epithelial cells covering the renal papillae.

It is found in the cytoplasm. Its subcellular location is the cell membrane. Functionally, phosphatidylserine receptor that enhances the engulfment of apoptotic cells. Hyaluronan receptor that binds to and mediates endocytosis of hyaluronic acid (HA). Also acts, in different species, as a primary systemic scavenger receptor for heparin (Hep), chondroitin sulfate (CS), dermatan sulfate (DS), nonglycosaminoglycan (GAG), acetylated low-density lipoprotein (AcLDL), pro-collagen propeptides and advanced glycation end products (AGE). May serve to maintain tissue integrity by supporting extracellular matrix turnover or it may contribute to maintaining fluidity of bodily liquids by resorption of hyaluronan. Counter receptor which plays an important role in lymphocyte recruitment in the hepatic vasculature. Binds to both Gram-positive and Gram-negative bacteria and may play a role in defense against bacterial infection. The proteolytically processed short form also functions as an endocytosis receptor for heparin internalization as well as HA and CS. The sequence is that of Stabilin-2 from Mus musculus (Mouse).